Consider the following 978-residue polypeptide: LRR receptor-like serine/threonine-protein kinase ER1 (978 aa).

The signal sequence occupies residues 1–24 (MTPAPAAASYRALVALLLVAVAVA). The Extracellular segment spans residues 25-577 (DDGSTLLEIK…GHQQKPLISK (553 aa)). Asn-62 and Asn-71 each carry an N-linked (GlcNAc...) asparagine glycan. LRR repeat units lie at residues 66-87 (AVAALNLSGLNLGGEISPAVGR), 88-112 (LKGIVSIDLKSNGLSGQIPDEIGDC), 114-136 (SLKTLDLSFNSLDGDIPFSVSKL), 137-159 (KHIESLILKNNQLIGVIPSTLSQ), 160-184 (LPNLKILDLAQNKLSGEIPRLIYWN), 186-208 (VLQYLGLRGNNLEGSISPDICQL), 209-232 (TGLWYFDVKNNSLTGPIPETIGNC), 233-257 (TSFQVLDLSYNKLSGSIPFNIGFLQ), 259-278 (ATLSLQGNMFTGPIPSVIGL), 279-302 (MQALAVLDLSYNQLSGPIPSILGN), 304-327 (TYTEKLYMQGNKLTGPIPPELGNM), 328-350 (STLHYLELNDNQLSGFIPPEFGK), 352-375 (TGLFDLNLANNNFEGPIPDNISSC), 377-399 (NLNSFNAYGNRLNGTIPPSLHKL), 400-423 (ESMTYLNLSSNFLSGSIPIELSRI), 424-447 (NNLDTLDLSCNMITGPIPSTIGSL), 449-470 (HLLRLNLSNNGLVGFIPAEIGN), 471-494 (LRSIMEIDMSNNHLGGLIPQELGM), 496-518 (QNLMLLNLKNNNITGDVSSLMNC), and 519-543 (FSLNILNVSYNNLAGVVPTDNNFSR). Residues Asn-218 and Asn-231 are each glycosylated (N-linked (GlcNAc...) asparagine). N-linked (GlcNAc...) asparagine glycosylation is found at Asn-302 and Asn-326. N-linked (GlcNAc...) asparagine glycans are attached at residues Asn-371, Asn-389, and Asn-406. Asn-454 carries N-linked (GlcNAc...) asparagine glycosylation. 3 N-linked (GlcNAc...) asparagine glycosylation sites follow: Asn-507, Asn-525, and Asn-540. Residues 578–598 (AAILGIAVGGLVILLMILVAV) form a helical membrane-spanning segment. The Cytoplasmic segment spans residues 599 to 978 (CRPHSPPVFK…FGEVISQNTE (380 aa)). The region spanning 645 to 916 (LSEKYIIGYG…EVVRVLDCLV (272 aa)) is the Protein kinase domain. ATP is bound by residues 651–659 (IGYGASSTV) and Lys-673. The Proton acceptor role is filled by Asp-771.

The protein belongs to the protein kinase superfamily. Ser/Thr protein kinase family.

The protein localises to the cell membrane. The enzyme catalyses L-seryl-[protein] + ATP = O-phospho-L-seryl-[protein] + ADP + H(+). It carries out the reaction L-threonyl-[protein] + ATP = O-phospho-L-threonyl-[protein] + ADP + H(+). Receptor kinase involved in the regulation of thermotolerance. Functions as a positive regulator of heat tolerance. May be involved in the regulation of cell proliferation and cell growth. This Oryza sativa subsp. japonica (Rice) protein is LRR receptor-like serine/threonine-protein kinase ER1.